Consider the following 70-residue polypeptide: Large ribosomal subunit protein eL38 (70 aa).

Belongs to the eukaryotic ribosomal protein eL38 family.

This chain is Large ribosomal subunit protein eL38 (rpl-38), found in Caenorhabditis elegans.